We begin with the raw amino-acid sequence, 123 residues long: WAP four-disulfide core domain protein 5 (123 aa).

The first 24 residues, 1–24, serve as a signal peptide directing secretion; the sequence is MRIQSLLLLGVLLAVGSQLPAAFG. WAP domains follow at residues 27-73 and 74-121; these read KGEK…CVPR and ISVK…RDPA. 8 disulfide bridges follow: cysteine 34/cysteine 62, cysteine 41/cysteine 66, cysteine 49/cysteine 61, cysteine 55/cysteine 70, cysteine 81/cysteine 109, cysteine 88/cysteine 113, cysteine 96/cysteine 108, and cysteine 102/cysteine 117.

The protein resides in the secreted. Putative acid-stable proteinase inhibitor. The protein is WAP four-disulfide core domain protein 5 (WFDC5) of Callithrix jacchus (White-tufted-ear marmoset).